The chain runs to 251 residues: 3-dehydroquinate dehydratase (251 aa).

Residues 47 to 49 (EWR) and R83 each bind 3-dehydroquinate. H144 acts as the Proton donor/acceptor in catalysis. The Schiff-base intermediate with substrate role is filled by K171. Residues R214, S233, and Q237 each coordinate 3-dehydroquinate.

It belongs to the type-I 3-dehydroquinase family. In terms of assembly, homodimer.

The catalysed reaction is 3-dehydroquinate = 3-dehydroshikimate + H2O. The protein operates within metabolic intermediate biosynthesis; chorismate biosynthesis; chorismate from D-erythrose 4-phosphate and phosphoenolpyruvate: step 3/7. In terms of biological role, involved in the third step of the chorismate pathway, which leads to the biosynthesis of aromatic amino acids. Catalyzes the cis-dehydration of 3-dehydroquinate (DHQ) and introduces the first double bond of the aromatic ring to yield 3-dehydroshikimate. This Klebsiella pneumoniae subsp. pneumoniae (strain ATCC 700721 / MGH 78578) protein is 3-dehydroquinate dehydratase.